Reading from the N-terminus, the 480-residue chain is Glycogen synthase 1 (480 aa).

K15 lines the ADP-alpha-D-glucose pocket.

It belongs to the glycosyltransferase 1 family. Bacterial/plant glycogen synthase subfamily.

The enzyme catalyses [(1-&gt;4)-alpha-D-glucosyl](n) + ADP-alpha-D-glucose = [(1-&gt;4)-alpha-D-glucosyl](n+1) + ADP + H(+). The protein operates within glycan biosynthesis; glycogen biosynthesis. Its function is as follows. Synthesizes alpha-1,4-glucan chains using ADP-glucose. This Rhizobium radiobacter (Agrobacterium tumefaciens) protein is Glycogen synthase 1 (glgA1).